A 276-amino-acid chain; its full sequence is 3-methyl-2-oxobutanoate hydroxymethyltransferase (276 aa).

2 residues coordinate Mg(2+): aspartate 44 and aspartate 83. 3-methyl-2-oxobutanoate is bound by residues 44–45 (DS), aspartate 83, and lysine 112. Glutamate 114 contacts Mg(2+). The Proton acceptor role is filled by glutamate 180. The tract at residues 256 to 276 (PTEAQSSRMKPDELSRALNAE) is disordered.

The protein belongs to the PanB family. In terms of assembly, homodecamer; pentamer of dimers. It depends on Mg(2+) as a cofactor.

It is found in the cytoplasm. The catalysed reaction is 3-methyl-2-oxobutanoate + (6R)-5,10-methylene-5,6,7,8-tetrahydrofolate + H2O = 2-dehydropantoate + (6S)-5,6,7,8-tetrahydrofolate. It participates in cofactor biosynthesis; (R)-pantothenate biosynthesis; (R)-pantoate from 3-methyl-2-oxobutanoate: step 1/2. Functionally, catalyzes the reversible reaction in which hydroxymethyl group from 5,10-methylenetetrahydrofolate is transferred onto alpha-ketoisovalerate to form ketopantoate. In Gluconacetobacter diazotrophicus (strain ATCC 49037 / DSM 5601 / CCUG 37298 / CIP 103539 / LMG 7603 / PAl5), this protein is 3-methyl-2-oxobutanoate hydroxymethyltransferase.